Consider the following 209-residue polypeptide: Uracil phosphoribosyltransferase (209 aa).

Residues Arg79, Arg104, and 131–139 (DPMLATGGS) contribute to the 5-phospho-alpha-D-ribose 1-diphosphate site. Uracil is bound by residues Ile194 and 199–201 (GDA). Asp200 lines the 5-phospho-alpha-D-ribose 1-diphosphate pocket.

The protein belongs to the UPRTase family. Mg(2+) is required as a cofactor.

The enzyme catalyses UMP + diphosphate = 5-phospho-alpha-D-ribose 1-diphosphate + uracil. Its pathway is pyrimidine metabolism; UMP biosynthesis via salvage pathway; UMP from uracil: step 1/1. Its activity is regulated as follows. Allosterically activated by GTP. Catalyzes the conversion of uracil and 5-phospho-alpha-D-ribose 1-diphosphate (PRPP) to UMP and diphosphate. The polypeptide is Uracil phosphoribosyltransferase (Clostridium beijerinckii (strain ATCC 51743 / NCIMB 8052) (Clostridium acetobutylicum)).